The primary structure comprises 428 residues: 3-phosphoshikimate 1-carboxyvinyltransferase (428 aa).

Positions 20, 21, and 25 each coordinate 3-phosphoshikimate. Residue K20 participates in phosphoenolpyruvate binding. Residues G92 and R120 each coordinate phosphoenolpyruvate. 3-phosphoshikimate-binding residues include S166, Q168, D314, and K341. Position 168 (Q168) interacts with phosphoenolpyruvate. Catalysis depends on D314, which acts as the Proton acceptor. Positions 345 and 387 each coordinate phosphoenolpyruvate.

The protein belongs to the EPSP synthase family. Monomer.

The protein localises to the cytoplasm. It carries out the reaction 3-phosphoshikimate + phosphoenolpyruvate = 5-O-(1-carboxyvinyl)-3-phosphoshikimate + phosphate. It functions in the pathway metabolic intermediate biosynthesis; chorismate biosynthesis; chorismate from D-erythrose 4-phosphate and phosphoenolpyruvate: step 6/7. In terms of biological role, catalyzes the transfer of the enolpyruvyl moiety of phosphoenolpyruvate (PEP) to the 5-hydroxyl of shikimate-3-phosphate (S3P) to produce enolpyruvyl shikimate-3-phosphate and inorganic phosphate. The protein is 3-phosphoshikimate 1-carboxyvinyltransferase of Listeria welshimeri serovar 6b (strain ATCC 35897 / DSM 20650 / CCUG 15529 / CIP 8149 / NCTC 11857 / SLCC 5334 / V8).